The following is a 138-amino-acid chain: Ribosome-binding factor A (138 aa).

Residues 116 to 138 (VAQDSQHQEGPASPDAKPESTEE) are disordered.

Belongs to the RbfA family. As to quaternary structure, monomer. Binds 30S ribosomal subunits, but not 50S ribosomal subunits or 70S ribosomes.

It is found in the cytoplasm. One of several proteins that assist in the late maturation steps of the functional core of the 30S ribosomal subunit. Associates with free 30S ribosomal subunits (but not with 30S subunits that are part of 70S ribosomes or polysomes). Required for efficient processing of 16S rRNA. May interact with the 5'-terminal helix region of 16S rRNA. In Pseudomonas syringae pv. tomato (strain ATCC BAA-871 / DC3000), this protein is Ribosome-binding factor A.